Reading from the N-terminus, the 307-residue chain is D-alanine--D-alanine ligase (307 aa).

The ATP-grasp domain maps to 101–301 (KTVMRAAGVD…FGELVRWMVE (201 aa)). 127 to 182 (PLPPPYVVKPIAEGSSVGVIIVRDGRSHPPQILASEEWTFGEQVLAEPYIAGRELT) contributes to the ATP binding site. Mg(2+) is bound by residues Asp251, Glu268, and Asn270.

Belongs to the D-alanine--D-alanine ligase family. Requires Mg(2+) as cofactor. It depends on Mn(2+) as a cofactor.

The protein resides in the cytoplasm. It catalyses the reaction 2 D-alanine + ATP = D-alanyl-D-alanine + ADP + phosphate + H(+). Its pathway is cell wall biogenesis; peptidoglycan biosynthesis. Cell wall formation. In Methylobacterium radiotolerans (strain ATCC 27329 / DSM 1819 / JCM 2831 / NBRC 15690 / NCIMB 10815 / 0-1), this protein is D-alanine--D-alanine ligase.